The sequence spans 259 residues: Cobalt-precorrin-4 C(11)-methyltransferase (259 aa).

It belongs to the precorrin methyltransferase family.

It catalyses the reaction Co-precorrin-4 + S-adenosyl-L-methionine = Co-precorrin-5A + S-adenosyl-L-homocysteine + H(+). It participates in cofactor biosynthesis; adenosylcobalamin biosynthesis; cob(II)yrinate a,c-diamide from sirohydrochlorin (anaerobic route): step 4/10. In terms of biological role, catalyzes the methylation of C-11 in cobalt-precorrin-4 to form cobalt-precorrin-5A. The polypeptide is Cobalt-precorrin-4 C(11)-methyltransferase (cbiF) (Methanocaldococcus jannaschii (strain ATCC 43067 / DSM 2661 / JAL-1 / JCM 10045 / NBRC 100440) (Methanococcus jannaschii)).